A 108-amino-acid chain; its full sequence is Ribonuclease P protein component (108 aa).

It belongs to the RnpA family. As to quaternary structure, consists of a catalytic RNA component (M1 or rnpB) and a protein subunit.

It carries out the reaction Endonucleolytic cleavage of RNA, removing 5'-extranucleotides from tRNA precursor.. In terms of biological role, RNaseP catalyzes the removal of the 5'-leader sequence from pre-tRNA to produce the mature 5'-terminus. It can also cleave other RNA substrates such as 4.5S RNA. The protein component plays an auxiliary but essential role in vivo by binding to the 5'-leader sequence and broadening the substrate specificity of the ribozyme. The polypeptide is Ribonuclease P protein component (Campylobacter jejuni subsp. doylei (strain ATCC BAA-1458 / RM4099 / 269.97)).